The following is a 152-amino-acid chain: Large ribosomal subunit protein uL13 (152 aa).

The protein belongs to the universal ribosomal protein uL13 family. As to quaternary structure, part of the 50S ribosomal subunit.

In terms of biological role, this protein is one of the early assembly proteins of the 50S ribosomal subunit, although it is not seen to bind rRNA by itself. It is important during the early stages of 50S assembly. The protein is Large ribosomal subunit protein uL13 of Wolbachia sp. subsp. Drosophila simulans (strain wRi).